The chain runs to 299 residues: MSSIKIECVLRENYRCGESPVWEEASKCLLFVDIPSKTVCRWDSISNRVQRVGVDAPVSSVALRQSGGYVATIGTKFCALNWEDQSVFILAMVDEDKKNNRFNDGKVDPAGRYFAGTMAEETAPAVLERHQGSLYSLFPDHSVKKYFDQVDISNGLDWSLDHKIFYYIDSLSYTVDAFDYDLPTGQISNRRTVYKMEKDEQIPDGMCIDVEGKLWVACYNGGRVIRLDPETGKRLQTVKLPVDKTTSCCFGGKDYSEMYVTCARDGMSAEGLLRQPDAGNIFKITGLGVKGIAPYSYAG.

Glutamate 18 contributes to the a divalent metal cation binding site. Residues arginine 101, asparagine 103, and glutamate 121 each coordinate substrate. At lysine 144 the chain carries N6-succinyllysine. Asparagine 154 and aspartate 204 together coordinate a divalent metal cation. Aspartate 204 acts as the Proton donor/acceptor in catalysis. N6-succinyllysine is present on residues lysine 244 and lysine 253. Serine 268 carries the post-translational modification Phosphoserine.

This sequence belongs to the SMP-30/CGR1 family. Monomer. Zn(2+) serves as cofactor. Mn(2+) is required as a cofactor. The cofactor is Ca(2+). Requires Mg(2+) as cofactor. It depends on Co(2+) as a cofactor. The N-terminus is blocked. As to expression, detected in liver (at protein level). Hepatocytes and renal proximal tubular epithelium.

It is found in the cytoplasm. It catalyses the reaction D-glucono-1,5-lactone + H2O = D-gluconate + H(+). Its pathway is cofactor biosynthesis; L-ascorbate biosynthesis via UDP-alpha-D-glucuronate pathway; L-ascorbate from UDP-alpha-D-glucuronate: step 3/4. Functionally, gluconolactonase with low activity towards other sugar lactones, including gulonolactone and galactonolactone. Catalyzes a key step in ascorbic acid (vitamin C) biosynthesis. Can also hydrolyze diisopropyl phosphorofluoridate and phenylacetate (in vitro). Calcium-binding protein. Modulates Ca(2+) signaling, and Ca(2+)-dependent cellular processes and enzyme activities. This chain is Regucalcin (Rgn), found in Rattus norvegicus (Rat).